The chain runs to 312 residues: Protoheme IX farnesyltransferase (312 aa).

8 consecutive transmembrane segments (helical) span residues 12-32 (LALT…PAML), 41-61 (FGLI…ANTF), 93-113 (VFAW…CHSW), 114-134 (LAAG…TKWL), 141-161 (NVIW…AVIT), 168-188 (FHAG…IFFW), 240-260 (VPAA…WFII), and 290-310 (ILFV…AHAV).

It belongs to the UbiA prenyltransferase family. Protoheme IX farnesyltransferase subfamily.

The protein resides in the cell membrane. The catalysed reaction is heme b + (2E,6E)-farnesyl diphosphate + H2O = Fe(II)-heme o + diphosphate. It functions in the pathway porphyrin-containing compound metabolism; heme O biosynthesis; heme O from protoheme: step 1/1. Its function is as follows. Converts heme B (protoheme IX) to heme O by substitution of the vinyl group on carbon 2 of heme B porphyrin ring with a hydroxyethyl farnesyl side group. The sequence is that of Protoheme IX farnesyltransferase from Corynebacterium jeikeium (strain K411).